A 200-amino-acid polypeptide reads, in one-letter code: Oligoribonuclease (200 aa).

Residues methionine 5–leucine 169 form the Exonuclease domain. The active site involves tyrosine 126.

It belongs to the oligoribonuclease family.

It localises to the cytoplasm. Its function is as follows. 3'-to-5' exoribonuclease specific for small oligoribonucleotides. The polypeptide is Oligoribonuclease (Streptomyces avermitilis (strain ATCC 31267 / DSM 46492 / JCM 5070 / NBRC 14893 / NCIMB 12804 / NRRL 8165 / MA-4680)).